Reading from the N-terminus, the 424-residue chain is Tyrosine--tRNA ligase 1 (424 aa).

Y37 contacts L-tyrosine. The 'HIGH' region signature appears at P42–H51. 2 residues coordinate L-tyrosine: Y175 and Q179. The 'KMSKS' region motif lies at K235–T239. K238 lines the ATP pocket. Positions A357–G414 constitute an S4 RNA-binding domain.

This sequence belongs to the class-I aminoacyl-tRNA synthetase family. TyrS type 1 subfamily. In terms of assembly, homodimer.

The protein resides in the cytoplasm. The catalysed reaction is tRNA(Tyr) + L-tyrosine + ATP = L-tyrosyl-tRNA(Tyr) + AMP + diphosphate + H(+). Functionally, catalyzes the attachment of tyrosine to tRNA(Tyr) in a two-step reaction: tyrosine is first activated by ATP to form Tyr-AMP and then transferred to the acceptor end of tRNA(Tyr). This is Tyrosine--tRNA ligase 1 from Photorhabdus laumondii subsp. laumondii (strain DSM 15139 / CIP 105565 / TT01) (Photorhabdus luminescens subsp. laumondii).